Here is an 809-residue protein sequence, read N- to C-terminus: Leucine--tRNA ligase (809 aa).

Positions 40 to 50 (PYPSGRIHMGH) match the 'HIGH' region motif. Positions 579 to 583 (KMSKS) match the 'KMSKS' region motif. An ATP-binding site is contributed by lysine 582.

This sequence belongs to the class-I aminoacyl-tRNA synthetase family.

The protein resides in the cytoplasm. It catalyses the reaction tRNA(Leu) + L-leucine + ATP = L-leucyl-tRNA(Leu) + AMP + diphosphate. The protein is Leucine--tRNA ligase of Campylobacter jejuni subsp. doylei (strain ATCC BAA-1458 / RM4099 / 269.97).